The primary structure comprises 316 residues: Transcription factor MafB (316 aa).

2 disordered regions span residues 40 to 78 and 116 to 204; these read PDRA…SPTE and HQMP…EDRF. A compositionally biased stretch (low complexity) spans 55-77; the sequence is SVSSTPISTPCSSVPSSPSFSPT. 2 stretches are compositionally biased toward basic residues: residues 130 to 144 and 160 to 172; these read GHHH…HQNH and QHPH…HHHQ. Low complexity predominate over residues 177-198; it reads PSGSSSSSQQLQNSHQQHQNSS. The basic motif stretch occupies residues 231 to 256; the sequence is RLKQKRRTLKNRGYAQSCRFKRVQQK. A bZIP domain is found at 231–294; sequence RLKQKRRTLK…DAYKIKCEKL (64 aa). The tract at residues 259-280 is leucine-zipper; that stretch reads LENEKTQLIQQVEQLKLEVSRL.

The protein belongs to the bZIP family. Maf subfamily. Homodimer or heterodimer with other bHLH-Zip transcription factors. Binds DNA as a homodimer or a heterodimer.

The protein resides in the nucleus. Acts as a transcriptional activator or repressor. Implicated in the regulation of cell-type specific gene expression and play a role in inductive events during lens development. The chain is Transcription factor MafB (mafb) from Xenopus tropicalis (Western clawed frog).